The chain runs to 160 residues: Thioredoxin-like protein 4A homolog (160 aa).

A disordered region spans residues 132–160; that stretch reads KFLKKKKKKKNKKKQKKKIKKIKKKIKNN. The span at 133-160 shows a compositional bias: basic residues; that stretch reads FLKKKKKKKNKKKQKKKIKKIKKKIKNN.

Belongs to the DIM1 family. As to quaternary structure, component of the precatalytic spliceosome (spliceosome B complex). Component of the U5 snRNP complex. Component of the U4/U6-U5 tri-snRNP complex.

It localises to the nucleus. Functionally, plays a role in pre-mRNA splicing as component of the U5 snRNP and U4/U6-U5 tri-snRNP complexes that are involved in spliceosome assembly, and as component of the precatalytic spliceosome (spliceosome B complex). The protein is Thioredoxin-like protein 4A homolog (txnl4a) of Dictyostelium discoideum (Social amoeba).